We begin with the raw amino-acid sequence, 128 residues long: Small ribosomal subunit protein uS9 (128 aa).

Belongs to the universal ribosomal protein uS9 family.

This chain is Small ribosomal subunit protein uS9, found in Amoebophilus asiaticus (strain 5a2).